Consider the following 542-residue polypeptide: MFGGFETIEAFEDDLYRDDSSSELSVDSEVEFQLYSQVHYSQNIHNANEEEGYEEKNCESSETVSIQPDQKNLIVLSDSEVIQLSDTSEVITLSDEDSIYRCKRKNIEVQAQEKTQSPATPRSNKVANKCKRSNKKPEPEESPSTIREVMIIEVSSDEEEESTISENENVESWMLLGCEEDDKDNDILLNLVGCKDAGAEGENDVNWFISDKDIEAKIDNNRSSGRWNNRYYSVNKNVTCRNCDKRGHLSKNCPLPQKVRPCCLCSERGHLQYGCPARYCLDCSLPMSSTHRCFERSSWRKRCDRCDMIGHYADACPEIWRQYHLTTKPGPPKKPKTPSGQSALVYCYNCAQKGHYGHECTERRMFNQAFPTSPFIYCYDDKYDIQQRDRRIKRKLKDIKKNGDFPRQFKRPHGEETDRYHHDRRKSRFSGKRSRWPRESKETQKEKTRGREGEKHRRDRQPRDEDEDFPRGLKPNSSSSSNSQKPSKSLHQASHYHRLREEKLRRESMRSKPKKRKFVEDGSHDDLFLIKQRKKKPKSSGF.

Residues 110-144 (QAQEKTQSPATPRSNKVANKCKRSNKKPEPEESPS) form a disordered region. The segment covering 112–126 (QEKTQSPATPRSNKV) has biased composition (polar residues). Residues Lys129 and Lys136 each participate in a glycyl lysine isopeptide (Lys-Gly) (interchain with G-Cter in SUMO2) cross-link. Position 142 is a phosphoserine (Ser142). Residues Lys236 and Lys251 each participate in a glycyl lysine isopeptide (Lys-Gly) (interchain with G-Cter in SUMO2) cross-link. CCHC-type zinc fingers lie at residues 238–255 (VTCR…NCPL), 260–277 (RPCC…GCPA), and 301–318 (KRCD…ACPE). Lys336 is covalently cross-linked (Glycyl lysine isopeptide (Lys-Gly) (interchain with G-Cter in SUMO2)). The CCHC-type 4 zinc-finger motif lies at 345 to 362 (VYCYNCAQKGHYGHECTE). The segment at 396–542 (LKDIKKNGDF…RKKKPKSSGF (147 aa)) is disordered. Lys410 participates in a covalent cross-link: Glycyl lysine isopeptide (Lys-Gly) (interchain with G-Cter in SUMO2). Over residues 412–421 (PHGEETDRYH) the composition is skewed to basic and acidic residues. The span at 422–435 (HDRRKSRFSGKRSR) shows a compositional bias: basic residues. A Glycyl lysine isopeptide (Lys-Gly) (interchain with G-Cter in SUMO2) cross-link involves residue Lys432. A compositionally biased stretch (basic and acidic residues) spans 436 to 456 (WPRESKETQKEKTRGREGEKH). Lys474 participates in a covalent cross-link: Glycyl lysine isopeptide (Lys-Gly) (interchain with G-Cter in SUMO2). The span at 474-489 (KPNSSSSSNSQKPSKS) shows a compositional bias: low complexity. A phosphoserine mark is found at Ser478 and Ser480. Glycyl lysine isopeptide (Lys-Gly) (interchain with G-Cter in SUMO2) cross-links involve residues Lys485 and Lys488. Basic and acidic residues-rich tracts occupy residues 499 to 510 (LREEKLRRESMR) and 518 to 528 (FVEDGSHDDLF). Lys531 participates in a covalent cross-link: Glycyl lysine isopeptide (Lys-Gly) (interchain with G-Cter in SUMO2). Over residues 531–542 (KQRKKKPKSSGF) the composition is skewed to basic residues.

As to quaternary structure, component of a nucleolar TRAMP-like complex, an ATP-dependent exosome regulatory complex consisting of a helicase (MTREX), an oligadenylate polymerase (TENT4B or TENT4A), and a substrate specific RNA-binding factor (ZCCHC7 or ZCCHC8). Several TRAMP-like complexes exist with specific compositions and are associated with nuclear, or nucleolar RNA exosomes.

It is found in the nucleus. It localises to the nucleolus. The polypeptide is Zinc finger CCHC domain-containing protein 7 (Zcchc7) (Rattus norvegicus (Rat)).